The sequence spans 131 residues: UPF0342 protein DSY1594 (131 aa).

Belongs to the UPF0342 family.

The protein is UPF0342 protein DSY1594 of Desulfitobacterium hafniense (strain Y51).